The sequence spans 208 residues: NADH-quinone oxidoreductase subunit I 2 (208 aa).

2 4Fe-4S ferredoxin-type domains span residues 79–109 and 119–148; these read ILVE…IEGK and SVFN…QTDI. Residues Cys-88, Cys-91, Cys-94, Cys-98, Cys-128, Cys-131, Cys-134, and Cys-138 each contribute to the [4Fe-4S] cluster site.

It belongs to the complex I 23 kDa subunit family. As to quaternary structure, NDH-1 is composed of 14 different subunits. Subunits NuoA, H, J, K, L, M, N constitute the membrane sector of the complex. The cofactor is [4Fe-4S] cluster.

Its subcellular location is the cell inner membrane. It catalyses the reaction a quinone + NADH + 5 H(+)(in) = a quinol + NAD(+) + 4 H(+)(out). Its function is as follows. NDH-1 shuttles electrons from NADH, via FMN and iron-sulfur (Fe-S) centers, to quinones in the respiratory chain. The immediate electron acceptor for the enzyme in this species is believed to be ubiquinone. Couples the redox reaction to proton translocation (for every two electrons transferred, four hydrogen ions are translocated across the cytoplasmic membrane), and thus conserves the redox energy in a proton gradient. The chain is NADH-quinone oxidoreductase subunit I 2 from Aquifex aeolicus (strain VF5).